A 319-amino-acid polypeptide reads, in one-letter code: Lambda-crystallin (319 aa).

Ala-2 is subject to N-acetylalanine. A Phosphoserine modification is found at Ser-3. NAD(+) contacts are provided by residues 16 to 17 (LV), Asp-36, Glu-97, and Lys-102. At Ser-111 the chain carries Phosphoserine.

Belongs to the 3-hydroxyacyl-CoA dehydrogenase family. In terms of assembly, homodimer. In terms of tissue distribution, detected in eye lens, kidney, liver, heart, lung, brain and testis.

The protein resides in the cytoplasm. The enzyme catalyses L-gulonate + NAD(+) = 3-dehydro-L-gulonate + NADH + H(+). Inhibited by malonate and by inorganic phosphate. Functionally, functions as a crystallin in the rabbit eye lens. Has high L-gulonate 3-dehydrogenase activity. It also exhibits low dehydrogenase activity toward L-3-hydroxybutyrate (HBA) and L-threonate. The polypeptide is Lambda-crystallin (CRYL1) (Oryctolagus cuniculus (Rabbit)).